Consider the following 152-residue polypeptide: Xanthine-guanine phosphoribosyltransferase (152 aa).

5-phospho-alpha-D-ribose 1-diphosphate is bound by residues 37–38 (RG), Arg-69, and 88–96 (DDLVDTGGT). Arg-69 contributes to the GMP binding site. Asp-89 contributes to the Mg(2+) binding site. Residues Asp-92 and Ile-135 each contribute to the guanine site. The xanthine site is built by Asp-92 and Ile-135. GMP contacts are provided by residues 92–96 (DTGGT) and 134–135 (WI).

The protein belongs to the purine/pyrimidine phosphoribosyltransferase family. XGPT subfamily. As to quaternary structure, homotetramer. Mg(2+) serves as cofactor.

Its subcellular location is the cell inner membrane. The catalysed reaction is GMP + diphosphate = guanine + 5-phospho-alpha-D-ribose 1-diphosphate. It catalyses the reaction XMP + diphosphate = xanthine + 5-phospho-alpha-D-ribose 1-diphosphate. It carries out the reaction IMP + diphosphate = hypoxanthine + 5-phospho-alpha-D-ribose 1-diphosphate. The protein operates within purine metabolism; GMP biosynthesis via salvage pathway; GMP from guanine: step 1/1. Its pathway is purine metabolism; XMP biosynthesis via salvage pathway; XMP from xanthine: step 1/1. Functionally, purine salvage pathway enzyme that catalyzes the transfer of the ribosyl-5-phosphate group from 5-phospho-alpha-D-ribose 1-diphosphate (PRPP) to the N9 position of the 6-oxopurines guanine and xanthine to form the corresponding ribonucleotides GMP (guanosine 5'-monophosphate) and XMP (xanthosine 5'-monophosphate), with the release of PPi. To a lesser extent, also acts on hypoxanthine. This Photobacterium profundum (strain SS9) protein is Xanthine-guanine phosphoribosyltransferase.